The following is a 381-amino-acid chain: Erythronate-4-phosphate dehydrogenase (381 aa).

The substrate site is built by serine 45 and threonine 66. Residues aspartate 146, threonine 174, 205-207 (ASR), and aspartate 231 each bind NAD(+). Residue arginine 207 is part of the active site. Glutamate 236 is an active-site residue. Histidine 253 functions as the Proton donor in the catalytic mechanism. Residue glycine 256 participates in NAD(+) binding. Tyrosine 257 contributes to the substrate binding site.

The protein belongs to the D-isomer specific 2-hydroxyacid dehydrogenase family. PdxB subfamily. Homodimer.

It is found in the cytoplasm. It catalyses the reaction 4-phospho-D-erythronate + NAD(+) = (R)-3-hydroxy-2-oxo-4-phosphooxybutanoate + NADH + H(+). Its pathway is cofactor biosynthesis; pyridoxine 5'-phosphate biosynthesis; pyridoxine 5'-phosphate from D-erythrose 4-phosphate: step 2/5. In terms of biological role, catalyzes the oxidation of erythronate-4-phosphate to 3-hydroxy-2-oxo-4-phosphonooxybutanoate. The protein is Erythronate-4-phosphate dehydrogenase of Stutzerimonas stutzeri (strain A1501) (Pseudomonas stutzeri).